The chain runs to 350 residues: Autophagy-related protein 3 (350 aa).

Residues 85–166 form a flexible region region; it reads NFAGDAGLEE…EEDDEAIIRD (82 aa). Positions 97–171 are disordered; the sequence is VDDGDEFKGS…AIIRDTDASG (75 aa). Over residues 102–113 the composition is skewed to basic and acidic residues; it reads EFKGSKGDDDGW. The span at 146-161 shows a compositional bias: acidic residues; it reads DDDDDIPDMEDEEDDE. Cys244 serves as the catalytic Glycyl thioester intermediate. A handle region region spans residues 248–326; it reads PVMKTLLDRA…DQEVAIRVDQ (79 aa). N6-acetyllysine occurs at positions 262 and 267.

Belongs to the ATG3 family. Monomer. Interacts with ATG8 through an intermediate thioester bond through the C-terminal Gly of ATG8. Also interacts with the 40 amino acid C-terminal region of the E1-like ATG7 enzyme. Also interacts with the ATG12-ATG5 conjugate. Interacts with HAT1. Post-translationally, acetylated by HAT1 at Lys-262 and Lys-267, which affects the interaction with ATG8 and prevents autophagy during both appressorium development and nutrient starvation.

It is found in the preautophagosomal structure. It localises to the cytoplasm. In terms of biological role, E2 conjugating enzyme required for the cytoplasm to vacuole transport (Cvt) and autophagy. Required for selective autophagic degradation of the nucleus (nucleophagy) as well as for mitophagy which contributes to regulate mitochondrial quantity and quality by eliminating the mitochondria to a basal level to fulfill cellular energy requirements and preventing excess ROS production. Responsible for the E2-like covalent binding of phosphatidylethanolamine to the C-terminal Gly of ATG8. The ATG12-ATG5 conjugate plays a role of an E3 and promotes the transfer of ATG8 from ATG3 to phosphatidylethanolamine (PE). This step is required for the membrane association of ATG8. The formation of the ATG8-phosphatidylethanolamine conjugate is essential for autophagy and for the cytoplasm to vacuole transport (Cvt). The ATG8-PE conjugate mediates tethering between adjacent membranes and stimulates membrane hemifusion, leading to expansion of the autophagosomal membrane during autophagy. Plays a role in appressorium formation and pathogenicity. This Pyricularia oryzae (strain 70-15 / ATCC MYA-4617 / FGSC 8958) (Rice blast fungus) protein is Autophagy-related protein 3.